We begin with the raw amino-acid sequence, 423 residues long: Protein IQ-DOMAIN 16 (423 aa).

IQ domains follow at residues 99–127 (RHWA…GIVK) and 128–150 (LQAL…CIKA). Residues 231–251 (QKKLEIAIKREKAQALALSNQ) are a coiled coil. Residues 235 to 252 (EIAIKREKAQALALSNQI) form a calmodulin-binding region.

The protein belongs to the IQD family. Binds to multiple calmodulin (CaM) in the presence of Ca(2+) and CaM-like proteins.

It localises to the cytoplasm. It is found in the cytoskeleton. The protein resides in the cell membrane. Functionally, may be involved in cooperative interactions with calmodulins or calmodulin-like proteins. Recruits calmodulin proteins to microtubules, thus being a potential scaffold in cellular signaling and trafficking. Regulates cell shape and elongation in aerial organs (i.e. cotyledons, leaves, and hypocotyls) probably by regulating cortical microtubules (MT) arrays orientation. May associate with nucleic acids and regulate gene expression at the transcriptional or post-transcriptional level. The protein is Protein IQ-DOMAIN 16 of Arabidopsis thaliana (Mouse-ear cress).